Reading from the N-terminus, the 448-residue chain is Chromosomal replication initiator protein DnaA (448 aa).

The domain I, interacts with DnaA modulators stretch occupies residues 1–85 (MHDNLPQIWE…EVHIVVPSEE (85 aa)). The interval 85 to 110 (ERVGDTQNINARRSNAQSPIMGNSPL) is domain II. The domain III, AAA+ region stretch occupies residues 111 to 327 (ILNPKYTFDT…GALIRIVAYS (217 aa)). ATP is bound by residues glycine 155, glycine 157, lysine 158, and threonine 159. Residues 328 to 448 (SLTNSEVTVE…DAIIKELKSD (121 aa)) are domain IV, binds dsDNA.

This sequence belongs to the DnaA family. As to quaternary structure, oligomerizes as a right-handed, spiral filament on DNA at oriC.

Its subcellular location is the cytoplasm. Functionally, plays an essential role in the initiation and regulation of chromosomal replication. ATP-DnaA binds to the origin of replication (oriC) to initiate formation of the DNA replication initiation complex once per cell cycle. Binds the DnaA box (a 9 base pair repeat at the origin) and separates the double-stranded (ds)DNA. Forms a right-handed helical filament on oriC DNA; dsDNA binds to the exterior of the filament while single-stranded (ss)DNA is stabiized in the filament's interior. The ATP-DnaA-oriC complex binds and stabilizes one strand of the AT-rich DNA unwinding element (DUE), permitting loading of DNA polymerase. After initiation quickly degrades to an ADP-DnaA complex that is not apt for DNA replication. Binds acidic phospholipids. The polypeptide is Chromosomal replication initiator protein DnaA (Alkaliphilus metalliredigens (strain QYMF)).